The sequence spans 445 residues: Phosphoglucosamine mutase (445 aa).

Residue Ser-102 is the Phosphoserine intermediate of the active site. 4 residues coordinate Mg(2+): Ser-102, Asp-241, Asp-243, and Asp-245. Residue Ser-102 is modified to Phosphoserine.

It belongs to the phosphohexose mutase family. The cofactor is Mg(2+). Activated by phosphorylation.

The catalysed reaction is alpha-D-glucosamine 1-phosphate = D-glucosamine 6-phosphate. In terms of biological role, catalyzes the conversion of glucosamine-6-phosphate to glucosamine-1-phosphate. This Shewanella pealeana (strain ATCC 700345 / ANG-SQ1) protein is Phosphoglucosamine mutase.